The chain runs to 76 residues: Omega-conotoxin-like TxO2 (76 aa).

A signal peptide spans 1–22 (MKLTCVVIVAVLFLTAWTFVTA). The propeptide occupies 23–52 (APHSSNALENLYLKAHHEMNNPEDSELNKR). 3 cysteine pairs are disulfide-bonded: Cys-53–Cys-67, Cys-60–Cys-71, and Cys-66–Cys-75.

It belongs to the conotoxin O1 superfamily. In terms of tissue distribution, expressed by the venom duct.

Its subcellular location is the secreted. In terms of biological role, omega-conotoxins act at presynaptic membranes, they bind and block voltage-gated calcium channels (Cav). This is Omega-conotoxin-like TxO2 from Conus textile (Cloth-of-gold cone).